Here is a 661-residue protein sequence, read N- to C-terminus: Probable potassium transport system protein Kup 1 (661 aa).

The span at 1-11 (MKGLFPAGGGN) shows a compositional bias: gly residues. Positions 1–38 (MKGLFPAGGGNPPSSYLSRFLPHRKERSPENVTSGRNG) are disordered. Transmembrane regions (helical) follow at residues 48–68 (LALGALGIVYGDIGTSPLYTI), 85–105 (IMGVLSLILWSLTMVVSIKYI), 139–159 (AVVVMAALTGAALLYGDGFIT), 177–197 (AAKNLIVPLACGILLGLFLVQ), 207–227 (IFGPVMLVWFATIATLGLLCI), 251–271 (VHGLVVLGSVVLSITGGEALY), 286–306 (WFAMVFPSLLLNYFGQGAALL), 324–344 (LLLPMVALATMASIIASQAMI), 384–404 (LMMVVCIGLVLVFRASSGLAG), 405–425 (AYGVAVTANMAITSVVYFFVA), 436–456 (TAPLVGLFLVFDITYFGSNLL), and 458–478 (FFDGGWFPLAVALVIVIVMAS).

Belongs to the HAK/KUP transporter (TC 2.A.72) family.

The protein localises to the cell inner membrane. It carries out the reaction K(+)(in) + H(+)(in) = K(+)(out) + H(+)(out). Functionally, transport of potassium into the cell. Likely operates as a K(+):H(+) symporter. This chain is Probable potassium transport system protein Kup 1, found in Syntrophobacter fumaroxidans (strain DSM 10017 / MPOB).